The chain runs to 176 residues: MSRVGKSPIALQGAEVKLADGAITVKGPLGTITQAINPLVNVANNDGTLNLSPVDESREANALSGTMRAIIANAVHGVTKGFERKLTLVGVGYRAQAQGDKLNLSLGFSHPVVHQMPEGVKAETPTQTEIVIKGINKQQVGQVAAEVRGYRPPEPYKGKGVRYSDEVVILKETKKK.

The protein belongs to the universal ribosomal protein uL6 family. In terms of assembly, part of the 50S ribosomal subunit.

In terms of biological role, this protein binds to the 23S rRNA, and is important in its secondary structure. It is located near the subunit interface in the base of the L7/L12 stalk, and near the tRNA binding site of the peptidyltransferase center. The protein is Large ribosomal subunit protein uL6 of Burkholderia ambifaria (strain MC40-6).